The primary structure comprises 560 residues: MKVWMAILISILCWQSSAWAVCPAWSPARAQEEISRLQQQIKQWDDDYWKEGKSEVEDGVYDQLSARLTQWQRCFGNETRDAMMPPLNGAVMHPVAHTGVRKMADKNALSLWMRERSDLWVQPKVDGVAVTLVYRDGKLNKAISRGNGLKGEDWTQKVRLISAVPQTVSGPLANSTLQGEIFLKRKGHIQQQMGGINARAKVAGLMMRQGNSDTLNSLAVFVWAWPDGPQLMTDRLKELATAGFTLTQTYTRAVKNADEVAHVRNEWWKAKLPFVTDGVVVRAAKEPESRHWLPGQAEWLVAWKYQPVAQVAEVKAIQFAVGKSGKISVVASLAPVMLDDKKVQRVNIGSVRRWQEWDIAPGDQILVSLAGQGIPRIDDVVWRGAERTKPTPPENRFNSLTCYFASDVCQEQFISRLVWLGSKQVLGLDGIGEAGWRALHQTHRFEHIFSWLLLTPEQLQNTPGIAKSKSAQLWHQFNLARQQPFTRWVMAMGIPLTRAALNASDERSWSQLLFSTEQFWQQLPGTGSGRARQVIEWKENAQIKKLGSWLAAQQITGFEP.

Lysine 124 acts as the N6-AMP-lysine intermediate in catalysis.

This sequence belongs to the NAD-dependent DNA ligase family. LigB subfamily.

The enzyme catalyses NAD(+) + (deoxyribonucleotide)n-3'-hydroxyl + 5'-phospho-(deoxyribonucleotide)m = (deoxyribonucleotide)n+m + AMP + beta-nicotinamide D-nucleotide.. Its function is as follows. Catalyzes the formation of phosphodiester linkages between 5'-phosphoryl and 3'-hydroxyl groups in double-stranded DNA using NAD as a coenzyme and as the energy source for the reaction. The polypeptide is DNA ligase B (Escherichia coli (strain SMS-3-5 / SECEC)).